Here is a 105-residue protein sequence, read N- to C-terminus: DRDAQTLTDERSDQGDGNFRYEFETSNGIYTQKTGTPGSEGQSNYQGSFRFTLEDGTIAEVTYIADENGFQPSSDLLPVGPPAPPHVQRLLEIAAEQRAQGITFD.

A disordered region spans residues 1-21 (DRDAQTLTDERSDQGDGNFRY). In terms of domain architecture, Chitin-binding type R&amp;R spans 16–81 (DGNFRYEFET…PSSDLLPVGP (66 aa)).

Arthrodial membrane.

The chain is Cuticle protein AMP1A from Homarus americanus (American lobster).